Reading from the N-terminus, the 357-residue chain is N-acetyl-gamma-glutamyl-phosphate reductase (357 aa).

Cys160 is a catalytic residue.

Belongs to the NAGSA dehydrogenase family. Type 1 subfamily.

It localises to the cytoplasm. It catalyses the reaction N-acetyl-L-glutamate 5-semialdehyde + phosphate + NADP(+) = N-acetyl-L-glutamyl 5-phosphate + NADPH + H(+). Its pathway is amino-acid biosynthesis; L-arginine biosynthesis; N(2)-acetyl-L-ornithine from L-glutamate: step 3/4. Functionally, catalyzes the NADPH-dependent reduction of N-acetyl-5-glutamyl phosphate to yield N-acetyl-L-glutamate 5-semialdehyde. In Synechococcus sp. (strain CC9605), this protein is N-acetyl-gamma-glutamyl-phosphate reductase.